Here is a 485-residue protein sequence, read N- to C-terminus: NADH-quinone oxidoreductase subunit N (485 aa).

Transmembrane regions (helical) follow at residues 8-28, 35-55, 75-95, 105-125, 127-147, 159-179, 203-223, 235-255, 271-291, 297-317, 326-346, 374-394, 408-430, and 455-475; these read LIALLPLLIVGLTVVVVMLSI, FLNATLSVLGLNAALVSLWFV, LYTGLVLLASLATCTFAYPWL, FYLLVLIAALGGILLAGANHL, ALFLGIELISLPLFGLVGYAF, YTILSAAASSFLLFGMALVYA, LLAGLGLMIVGLGFKLSLVPF, PAPVSTFLATASKIAIFGVVM, VVLGLIAFASIIFGNLMALSQ, LLGYSSISHLGYLLVALIALQ, VGVYLAGYLFSSLGAFGVVSL, AVMTVMMLSLAGIPMTLGFIG, WWLVAAVVVGSAIGLYYYLRVAV, and IVVLISALLVLVLGIWPQPLI.

Belongs to the complex I subunit 2 family. In terms of assembly, NDH-1 is composed of 13 different subunits. Subunits NuoA, H, J, K, L, M, N constitute the membrane sector of the complex.

The protein localises to the cell inner membrane. It catalyses the reaction a quinone + NADH + 5 H(+)(in) = a quinol + NAD(+) + 4 H(+)(out). Functionally, NDH-1 shuttles electrons from NADH, via FMN and iron-sulfur (Fe-S) centers, to quinones in the respiratory chain. The immediate electron acceptor for the enzyme in this species is believed to be ubiquinone. Couples the redox reaction to proton translocation (for every two electrons transferred, four hydrogen ions are translocated across the cytoplasmic membrane), and thus conserves the redox energy in a proton gradient. The chain is NADH-quinone oxidoreductase subunit N from Klebsiella pneumoniae subsp. pneumoniae (strain ATCC 700721 / MGH 78578).